The chain runs to 158 residues: NAD(P)H-quinone oxidoreductase subunit J, chloroplastic (158 aa).

The protein belongs to the complex I 30 kDa subunit family. NDH is composed of at least 16 different subunits, 5 of which are encoded in the nucleus.

Its subcellular location is the plastid. The protein resides in the chloroplast thylakoid membrane. The catalysed reaction is a plastoquinone + NADH + (n+1) H(+)(in) = a plastoquinol + NAD(+) + n H(+)(out). It carries out the reaction a plastoquinone + NADPH + (n+1) H(+)(in) = a plastoquinol + NADP(+) + n H(+)(out). Functionally, NDH shuttles electrons from NAD(P)H:plastoquinone, via FMN and iron-sulfur (Fe-S) centers, to quinones in the photosynthetic chain and possibly in a chloroplast respiratory chain. The immediate electron acceptor for the enzyme in this species is believed to be plastoquinone. Couples the redox reaction to proton translocation, and thus conserves the redox energy in a proton gradient. This chain is NAD(P)H-quinone oxidoreductase subunit J, chloroplastic, found in Vitis vinifera (Grape).